The sequence spans 339 residues: Protein-glutamate methylesterase/protein-glutamine glutaminase 3 (339 aa).

A Response regulatory domain is found at 2–119; that stretch reads NIGIVNDLPL…GLSTDASPQA (118 aa). Asp53 carries the 4-aspartylphosphate modification. One can recognise a CheB-type methylesterase domain in the interval 141-336; it reads PGPAPTRGQP…PQLIARIALT (196 aa). Catalysis depends on residues Ser158, His185, and Asp278.

Belongs to the CheB family. In terms of processing, phosphorylated by CheA. Phosphorylation of the N-terminal regulatory domain activates the methylesterase activity.

The protein resides in the cytoplasm. It carries out the reaction [protein]-L-glutamate 5-O-methyl ester + H2O = L-glutamyl-[protein] + methanol + H(+). It catalyses the reaction L-glutaminyl-[protein] + H2O = L-glutamyl-[protein] + NH4(+). In terms of biological role, involved in chemotaxis. Part of a chemotaxis signal transduction system that modulates chemotaxis in response to various stimuli. Catalyzes the demethylation of specific methylglutamate residues introduced into the chemoreceptors (methyl-accepting chemotaxis proteins or MCP) by CheR. Also mediates the irreversible deamidation of specific glutamine residues to glutamic acid. This Burkholderia orbicola (strain AU 1054) protein is Protein-glutamate methylesterase/protein-glutamine glutaminase 3.